The following is a 202-amino-acid chain: MSCVPWKGDKAKSESLELPQAAPPQIYHEKQRRELCALHALNNVFQDSNAFTRDTLQEIFQRLSPNTMVTPHKKSMLGNGNYDVNVIMAALQTKGYEAVWWDKRRDVGVIALTNVMGFIMNLPSSLCWGPLKLPLKRQHWICVREVGGAYYNLDSKLKMPEWIGGESELRKFLKHHLRGKNCELLLVVPEEVEAHQSWRTDV.

The residue at position 15 (Ser15) is a Phosphoserine. The Josephin domain occupies 23–202 (PPQIYHEKQR…EAHQSWRTDV (180 aa)). The Nucleophile role is filled by Cys36. His139 functions as the Proton acceptor in the catalytic mechanism.

Interacts with beta-actin/ACTB. Post-translationally, monoubiquitinated. Ubiquitination activates deubiquitination activity in vitro.

It is found in the cell membrane. It localises to the cytoplasm. The enzyme catalyses Thiol-dependent hydrolysis of ester, thioester, amide, peptide and isopeptide bonds formed by the C-terminal Gly of ubiquitin (a 76-residue protein attached to proteins as an intracellular targeting signal).. Its function is as follows. Deubiquitinates monoubiquitinated probes (in vitro). When ubiquitinated, cleaves 'Lys-63'-linked and 'Lys-48'-linked poly-ubiquitin chains (in vitro), hence may act as a deubiquitinating enzyme. May increase macropinocytosis and suppress clathrin- and caveolae-mediated endocytosis. May enhance membrane dynamics and cell motility independently of its catalytic activity. The sequence is that of Josephin-1 (JOSD1) from Pongo abelii (Sumatran orangutan).